Here is a 220-residue protein sequence, read N- to C-terminus: Claudin-6 (220 aa).

Over 1–7 (MASAGMQ) the chain is Cytoplasmic. The helical transmembrane segment at 8–28 (ILGVVLTLLGWVNGLVSCALP) threads the bilayer. The Extracellular portion of the chain corresponds to 29–81 (MWKVTAFIGNSIVVAQVVWEGLWMSCVVQSTGQMQCKVYDSLLALPQDLQAAR). The chain crosses the membrane as a helical span at residues 82–102 (ALCVIALLVALFGLLVYLAGA). Residues 103-116 (KCTTCVEEKDSKAR) lie on the Cytoplasmic side of the membrane. The chain crosses the membrane as a helical span at residues 117–137 (LVLTSGIVFVISGVLTLIPVC). At 138–160 (WTAHAIIRDFYNPLVAEAQKREL) the chain is on the extracellular side. The chain crosses the membrane as a helical span at residues 161 to 181 (GASLYLGWAASGLLLLGGGLL). Residues 182 to 220 (CCTCPSGGSQGPSHYMARYSTSAPAISRGPSEYPTKNYV) lie on the Cytoplasmic side of the membrane. Phosphoserine is present on residues Ser-201, Ser-203, Ser-208, and Ser-212. Positions 219-220 (YV) are interactions with TJP1, TJP2 and TJP3.

It belongs to the claudin family. In terms of assembly, directly interacts with TJP1/ZO-1, TJP2/ZO-2 and TJP3/ZO-3. Interacts with CLDN1, CD81 and OCLN. Expressed in the liver, in peripheral blood mononuclear cells and hepatocarcinoma cell lines.

The protein resides in the cell junction. It localises to the tight junction. It is found in the cell membrane. Its function is as follows. Plays a major role in tight junction-specific obliteration of the intercellular space. In terms of biological role, (Microbial infection) Acts as a receptor for hepatitis C virus (HCV) entry into hepatic cells. The chain is Claudin-6 (CLDN6) from Homo sapiens (Human).